Reading from the N-terminus, the 866-residue chain is Probable outer membrane usher protein ElfC (866 aa).

The N-terminal stretch at 1–35 (MYRTHRQHSLLSSGGVPSFIGGLVVFVSAAFNAQA) is a signal peptide.

It belongs to the fimbrial export usher family.

It is found in the cell outer membrane. Functionally, part of the elfADCG fimbrial operon, which could be required for adherence to host epithelial cells. Could be involved in the export and assembly of the ElfA fimbrial subunits across the outer membrane. This is Probable outer membrane usher protein ElfC (elfC) from Escherichia coli O157:H7.